A 337-amino-acid chain; its full sequence is PHD finger protein 11 (337 aa).

Residues 42 to 78 (KRICALCPKDLECSVLYFAQSENIAAHENCLLYSSAL) form a C2HC pre-PHD-type zinc finger. The segment at 108–160 (LKCTFCGKKGATVGCDLKSCFKNYHFFCAKNDHAVLQADGRTGIYKVFCQQHA) adopts a PHD-type zinc-finger fold.

Interacts with BRCA1 and RELA.

It is found in the nucleus. Functionally, positive regulator of Th1-type cytokine gene expression. This Bos taurus (Bovine) protein is PHD finger protein 11 (PHF11).